The sequence spans 393 residues: Phosphoglycerate kinase (393 aa).

Residues 21 to 23, Arg-36, 59 to 62, Arg-113, and Arg-146 contribute to the substrate site; these read DLN and HLGR. ATP is bound by residues Lys-197, Glu-319, and 345–348; that span reads GGDT.

The protein belongs to the phosphoglycerate kinase family. As to quaternary structure, monomer.

It localises to the cytoplasm. It catalyses the reaction (2R)-3-phosphoglycerate + ATP = (2R)-3-phospho-glyceroyl phosphate + ADP. It functions in the pathway carbohydrate degradation; glycolysis; pyruvate from D-glyceraldehyde 3-phosphate: step 2/5. In Nitratidesulfovibrio vulgaris (strain DSM 19637 / Miyazaki F) (Desulfovibrio vulgaris), this protein is Phosphoglycerate kinase.